Consider the following 379-residue polypeptide: Succinyl-diaminopimelate desuccinylase (379 aa).

Histidine 70 is a Zn(2+) binding site. Residue aspartate 72 is part of the active site. Aspartate 103 is a Zn(2+) binding site. Catalysis depends on glutamate 137, which acts as the Proton acceptor. The Zn(2+) site is built by glutamate 138, glutamate 166, and histidine 352.

This sequence belongs to the peptidase M20A family. DapE subfamily. As to quaternary structure, homodimer. Zn(2+) is required as a cofactor. The cofactor is Co(2+).

It carries out the reaction N-succinyl-(2S,6S)-2,6-diaminopimelate + H2O = (2S,6S)-2,6-diaminopimelate + succinate. The protein operates within amino-acid biosynthesis; L-lysine biosynthesis via DAP pathway; LL-2,6-diaminopimelate from (S)-tetrahydrodipicolinate (succinylase route): step 3/3. In terms of biological role, catalyzes the hydrolysis of N-succinyl-L,L-diaminopimelic acid (SDAP), forming succinate and LL-2,6-diaminopimelate (DAP), an intermediate involved in the bacterial biosynthesis of lysine and meso-diaminopimelic acid, an essential component of bacterial cell walls. The polypeptide is Succinyl-diaminopimelate desuccinylase (Burkholderia pseudomallei (strain 1106a)).